We begin with the raw amino-acid sequence, 315 residues long: Olfactory receptor 3A2 (315 aa).

Topologically, residues 1 to 29 (MEPEAGTNRTAVAEFILLGLVQTEEMQPV) are extracellular. Asn8 carries N-linked (GlcNAc...) asparagine glycosylation. The helical transmembrane segment at 30-52 (VFVLFLFAYLVTIGGNLSILAAI) threads the bilayer. Residues 53–60 (LVEPKLHA) lie on the Cytoplasmic side of the membrane. Residues 61 to 82 (PMYFFLGNLSVLDVGCITVTVP) traverse the membrane as a helical segment. Residues 83–103 (AMLGRLLSHKSTISYDACLSQ) are Extracellular-facing. A disulfide bond links Cys100 and Cys192. The chain crosses the membrane as a helical span at residues 104 to 123 (LFFFHLLAGMDCFLLTAMAY). The Cytoplasmic segment spans residues 124-143 (DRFLAICWPLTYSTRMSQTV). Residues 144–161 (QRMLVAASWACAFTNALT) form a helical membrane-spanning segment. The Extracellular segment spans residues 162 to 199 (HTVAMSTLNFCGPNEVNHFYCDLPQLFQLSCSSTQLNE). The chain crosses the membrane as a helical span at residues 200-223 (LLLFAVGFIMAGTPLVLIITSYSH). At 224 to 240 (VAAAVLRIRSVEGWKKA) the chain is on the cytoplasmic side. A helical transmembrane segment spans residues 241-264 (FSTCGSHLTVVCLFFGTGIFNYMR). The Extracellular portion of the chain corresponds to 265–275 (LGSEEASDKDK). A helical membrane pass occupies residues 276-295 (GVGVFNTVINPMLNPLIYSL). Topologically, residues 296-315 (RNPDVQGALWRIFLGRRSLT) are cytoplasmic.

The protein belongs to the G-protein coupled receptor 1 family.

The protein resides in the cell membrane. In terms of biological role, odorant receptor. The sequence is that of Olfactory receptor 3A2 (OR3A2) from Pan troglodytes (Chimpanzee).